The chain runs to 280 residues: Ribosomal RNA small subunit methyltransferase A (280 aa).

Residues asparagine 11, leucine 13, glycine 37, glutamate 57, aspartate 85, and asparagine 106 each coordinate S-adenosyl-L-methionine.

The protein belongs to the class I-like SAM-binding methyltransferase superfamily. rRNA adenine N(6)-methyltransferase family. RsmA subfamily.

It is found in the cytoplasm. It catalyses the reaction adenosine(1518)/adenosine(1519) in 16S rRNA + 4 S-adenosyl-L-methionine = N(6)-dimethyladenosine(1518)/N(6)-dimethyladenosine(1519) in 16S rRNA + 4 S-adenosyl-L-homocysteine + 4 H(+). Specifically dimethylates two adjacent adenosines (A1518 and A1519) in the loop of a conserved hairpin near the 3'-end of 16S rRNA in the 30S particle. May play a critical role in biogenesis of 30S subunits. The polypeptide is Ribosomal RNA small subunit methyltransferase A (Campylobacter concisus (strain 13826)).